A 180-amino-acid chain; its full sequence is ADP-ribosylation factor 5 (180 aa).

Gly2 is lipidated: N-myristoyl glycine. Residues 24 to 31 (GLDAAGKT), 67 to 71 (DVGGQ), and 126 to 129 (NKQD) each bind GTP.

It belongs to the small GTPase superfamily. Arf family. In terms of assembly, interacts (when activated) with GGA1, GGA2 and GGA3; the interaction is required for proper subcellular location of GGA1, GGA2 and GGA3. Binds ASAP2. Interacts with NCS1/FREQ at the Golgi complex. Interacts with RAB11FIP3 and RAB11FIP4.

The protein localises to the golgi apparatus. Its subcellular location is the cytoplasm. It is found in the perinuclear region. The protein resides in the membrane. It localises to the trans-Golgi network membrane. GTP-binding protein involved in protein trafficking; may modulate vesicle budding and uncoating within the Golgi apparatus. Functionally, (Microbial infection) Functions as an allosteric activator of the cholera toxin catalytic subunit, an ADP-ribosyltransferase. In Homo sapiens (Human), this protein is ADP-ribosylation factor 5 (ARF5).